A 1829-amino-acid chain; its full sequence is Sodium channel protein type 4 subunit alpha A (1829 aa).

The Cytoplasmic portion of the chain corresponds to 1-124; that stretch reads MARLLPPTGT…RGAIKILIHS (124 aa). Residues 32–52 form a disordered region; that stretch reads STREELEGAEEEPQAPSSDLE. An I repeat occupies 106–421; sequence CISPFSIVRR…VVAMAYDEQN (316 aa). The chain crosses the membrane as a helical span at residues 125–143; that stretch reads LFSMFIMITILSNCVFMTM. The Extracellular portion of the chain corresponds to 144–150; sequence SNPPAWS. A helical membrane pass occupies residues 151 to 171; the sequence is KTVEYVFTGIYTFEATVKVLS. The Cytoplasmic portion of the chain corresponds to 172-185; the sequence is RGFCIGPFTFLRDP. Residues 186–203 form a helical membrane-spanning segment; sequence WNWLDFMVISMAYVTEFV. Over 204–209 the chain is Extracellular; that stretch reads DLGNVS. An N-linked (GlcNAc...) asparagine glycan is attached at Asn207. A helical membrane pass occupies residues 210–226; sequence ALRTFRVLRALKTITVI. The Cytoplasmic segment spans residues 227 to 245; sequence PGLKTIVGALIQSVKKMID. A helical membrane pass occupies residues 246-265; that stretch reads VMILTIFALAVFALIGLQLF. Residues 266–358 are Extracellular-facing; sequence MGNLRQKCIR…PNYGYTSYDN (93 aa). Cys273 and Cys327 form a disulfide bridge. Asn280, Asn293, and Asn329 each carry an N-linked (GlcNAc...) asparagine glycan. Cys336 and Cys342 form a disulfide bridge. The segment at residues 359–383 is an intramembrane region (pore-forming); sequence FGWAFLALFRLMTQDFWENLFQLTL. The Extracellular segment spans residues 384 to 390; the sequence is RAAGKTY. The chain crosses the membrane as a helical span at residues 391–411; sequence MIFFVVVIFLGSFYLINLILA. Over 412 to 582 the chain is Cytoplasmic; that stretch reads VVAMAYDEQN…KWVHFVVMDP (171 aa). Over residues 446–467 the composition is skewed to polar residues; sequence ETGSKASLASQKTQSRGSNRTG. A disordered region spans residues 446–468; sequence ETGSKASLASQKTQSRGSNRTGS. One copy of the II repeat lies at 564 to 836; sequence CCAPWILFKK…QIAIGRITRG (273 aa). The chain crosses the membrane as a helical span at residues 583–601; it reads FVDLGITICIVLNTLFMAM. The Extracellular portion of the chain corresponds to 602-612; the sequence is EHYPMSPHFEH. A helical membrane pass occupies residues 613 to 632; sequence VLSVGNLVFTGIFTAEMVFK. Residues 633–646 lie on the Cytoplasmic side of the membrane; it reads LIAMDPYYYFQVGW. Residues 647-666 form a helical membrane-spanning segment; the sequence is NIFDSIIVTLSLVELGLANV. Over 667–668 the chain is Extracellular; it reads QG. A helical transmembrane segment spans residues 669 to 686; the sequence is LSVLRSFRLLRVFKLAKS. The Cytoplasmic segment spans residues 687 to 702; it reads WPTLNMLIKIIGNSVG. A helical membrane pass occupies residues 703-721; the sequence is ALGNLTLVLAIIVFIFAVV. The Extracellular portion of the chain corresponds to 722–750; that stretch reads GMQLFGKSYKDCVCKISEDCELPRWHMND. Cys735 and Cys741 are oxidised to a cystine. Positions 751 to 771 form an intramembrane region, pore-forming; that stretch reads FFHSFLIVFRILCGEWIETMW. The Extracellular portion of the chain corresponds to 772-782; sequence DCMEVAGASMC. A disulfide bridge links Cys773 with Cys782. The helical transmembrane segment at 783-801 threads the bilayer; sequence LIVFMMVMVIGNLVVLNLF. Over 802 to 998 the chain is Cytoplasmic; sequence LALLLSSFSG…TCFTIVEHDY (197 aa). Residues 901–957 are disordered; that stretch reads SDVEEDEDSESSDEEDAKATLNDGDSSVCSTVDYQPPEPEPEPEEVEEEEPEPEEPE. Residues 902 to 916 show a composition bias toward acidic residues; sequence DVEEDEDSESSDEED. A compositionally biased stretch (polar residues) spans 923 to 933; that stretch reads DGDSSVCSTVD. Residues 939–957 show a composition bias toward acidic residues; it reads PEPEPEEVEEEEPEPEEPE. An III repeat occupies 979 to 1292; that stretch reads WGKKWWNLRR…KKYYNAMKKL (314 aa). A helical transmembrane segment spans residues 999–1016; that stretch reads FETFIIFMILLSSGALAF. The Extracellular segment spans residues 1017-1029; that stretch reads EDINIERRRVIKT. The chain crosses the membrane as a helical span at residues 1030–1048; it reads ILEYADKVFTYIFIVEMLL. The Cytoplasmic portion of the chain corresponds to 1049-1062; that stretch reads KWVAYGFKTYFTNA. A helical membrane pass occupies residues 1063-1081; it reads WCWLDFLIVDVSLVSLTAN. Topologically, residues 1082-1089 are extracellular; that stretch reads LMGYSELG. Residues 1090 to 1108 form a helical membrane-spanning segment; sequence AIKSLRTLRALRPLRALSR. Over 1109-1125 the chain is Cytoplasmic; sequence FEGMRVVVNALVGAIPS. The chain crosses the membrane as a helical span at residues 1126 to 1145; it reads IFNVLLVCLIFWLIFSIMGV. Residues 1146-1196 lie on the Extracellular side of the membrane; the sequence is NLFAGKFYHCINTTTEERIPMDVVNNKSDCMALMYTNEVRWVNVKVNYDNV. Cys1155 and Cys1175 are joined by a disulfide. N-linked (GlcNAc...) asparagine glycosylation is found at Asn1157 and Asn1171. The segment at residues 1197-1218 is an intramembrane region (pore-forming); that stretch reads GLGYLSLLQIATFKGWMDIMYA. At 1219–1235 the chain is on the extracellular side; that stretch reads AVDSREVDEQPSYEINL. A helical membrane pass occupies residues 1236 to 1257; it reads YMYLYFVIFIIFGSFFTLNLFI. The Cytoplasmic portion of the chain corresponds to 1258-1320; sequence GVIIDNFNQQ…LVFDFISKQF (63 aa). Residues 1276–1278 form an important for rapid channel inactivation region; that stretch reads IFM. One copy of the IV repeat lies at 1301–1599; sequence IPRPSNIIQG…WEKFDVDATQ (299 aa). A helical transmembrane segment spans residues 1321–1338; it reads FDIFIMVLICLNMVTMMI. The Extracellular portion of the chain corresponds to 1339–1349; that stretch reads ETDDQSAEKEY. The chain crosses the membrane as a helical span at residues 1350 to 1368; that stretch reads VLYQINLVFIVVFTSECVL. Topologically, residues 1369-1380 are cytoplasmic; that stretch reads KLFALRQYFFTI. A helical transmembrane segment spans residues 1381 to 1398; that stretch reads GWNVFDFVVVILSIAGLM. Residues 1399–1411 are Extracellular-facing; the sequence is LSDIIEKYFVSPT. A helical transmembrane segment spans residues 1412 to 1428; sequence LFRVIRLARIGRVLRLI. Over 1429–1447 the chain is Cytoplasmic; it reads RGAKGIRTLLFALMMSLPA. The chain crosses the membrane as a helical span at residues 1448–1465; the sequence is LFNIGLLLFLIMFIFSIF. Residues 1466-1487 lie on the Extracellular side of the membrane; that stretch reads GMSNFAYVKKQAGIDDIFNFET. An intramembrane region (pore-forming) is located at residues 1488–1510; the sequence is FGGSIICLFEITTSAGWDGLLLP. The Extracellular portion of the chain corresponds to 1511 to 1540; sequence ILNSGPPDCDPDFENPGTDVRGNCGNPGMG. Cys1519 and Cys1534 are disulfide-bonded. A helical transmembrane segment spans residues 1541–1563; it reads IMFFCSYIIMSFLVVVNMYIAII. The Cytoplasmic portion of the chain corresponds to 1564-1829; sequence LENFNNAQEE…NATTIKESIV (266 aa). The IQ domain occupies 1693–1722; it reads EERAAIAVQRIYRRHLLKRAIRYACFMRRS. The tract at residues 1765 to 1786 is disordered; sequence PMRPNSQPPKPSQVTQTRASVT.

The protein belongs to the sodium channel (TC 1.A.1.10) family. Nav1.4/SCN4A subfamily. As to quaternary structure, voltage-gated sodium (Nav) channels consist of an ion-conducting alpha subunit which is functional on its own associated with regulatory beta subunits. In terms of tissue distribution, expressed in skeletal muscle, brain, spinal cord, and eye.

It localises to the cell membrane. It catalyses the reaction Na(+)(in) = Na(+)(out). Pore-forming subunit of a voltage-gated sodium (Nav) channel that directly mediates the depolarizing phase of action potentials in excitable membranes. Navs, also called VGSCs (voltage-gated sodium channels) or VDSCs (voltage-dependent sodium channels), operate by switching between closed and open conformations depending on the voltage difference across the membrane. In the open conformation they allow Na(+) ions to selectively pass through the pore, along their electrochemical gradient. The influx of Na+ ions provokes membrane depolarization, initiating the propagation of electrical signals throughout cells and tissues. This Danio rerio (Zebrafish) protein is Sodium channel protein type 4 subunit alpha A (scn4aa).